Consider the following 357-residue polypeptide: Chorismate synthase (357 aa).

Position 47 (Arg-47) interacts with NADP(+). Residues Arg-123–Ser-125, Gly-281, Lys-296–Ser-300, and Arg-324 contribute to the FMN site.

The protein belongs to the chorismate synthase family. Homotetramer. FMNH2 is required as a cofactor.

The catalysed reaction is 5-O-(1-carboxyvinyl)-3-phosphoshikimate = chorismate + phosphate. It participates in metabolic intermediate biosynthesis; chorismate biosynthesis; chorismate from D-erythrose 4-phosphate and phosphoenolpyruvate: step 7/7. Functionally, catalyzes the anti-1,4-elimination of the C-3 phosphate and the C-6 proR hydrogen from 5-enolpyruvylshikimate-3-phosphate (EPSP) to yield chorismate, which is the branch point compound that serves as the starting substrate for the three terminal pathways of aromatic amino acid biosynthesis. This reaction introduces a second double bond into the aromatic ring system. This is Chorismate synthase from Chlamydia trachomatis serovar D (strain ATCC VR-885 / DSM 19411 / UW-3/Cx).